Here is a 274-residue protein sequence, read N- to C-terminus: MDAALQSLSRFVADCAVLAPKVVNGRFGKMDVLHHRPTTSKLFLRKTIAAHSFSADEINVHDLMSDHPSFVDMYFCYSSPTAWAIVMDYVPCPDLFETLQTQGALDNALVVNIVRQLCDALNDLHNATGYIHNDVKLENVLYFGARDRVYLCDYGLCKREHSPVHDGTLEYFSPEKIRRHNYARSFDWYAVGVLAYKLLTGGRHPFERSADEVLDLASMRRRQQYNDPAALKNVRNLMARDFVFCLTRFNFECRSTDYKQIAKHSFLASRHDYI.

In terms of domain architecture, Protein kinase spans 16-273 (AVLAPKVVNG…HSFLASRHDY (258 aa)). ATP is bound by residues 22 to 30 (VVNGRFGKM) and Lys-46. The active-site Proton acceptor is the Asp-134.

Belongs to the protein kinase superfamily. Ser/Thr protein kinase family.

It catalyses the reaction L-seryl-[protein] + ATP = O-phospho-L-seryl-[protein] + ADP + H(+). The catalysed reaction is L-threonyl-[protein] + ATP = O-phospho-L-threonyl-[protein] + ADP + H(+). The sequence is that of Serine/threonine-protein kinase 1 (PK1) from Orgyia pseudotsugata multicapsid polyhedrosis virus (OpMNPV).